The following is a 1235-amino-acid chain: DNA polymerase catalytic subunit (1235 aa).

2 disordered regions span residues 640–692 (QGRF…TAGR) and 1098–1134 (AAAP…ASKP). Residues 650-661 (APKRPAAAREDE) show a composition bias toward basic and acidic residues. Over residues 662 to 675 (ERPEEEGEDEDERE) the composition is skewed to acidic residues. Positions 676 to 691 (EGGGEREPEGARETAG) are enriched in basic and acidic residues.

It belongs to the DNA polymerase type-B family. As to quaternary structure, forms a complex with the ssDNA-binding protein UL29, the DNA polymerase processivity factor, and the alkaline exonuclease. Interacts with the putative helicase-primase complex subunit UL8; this interaction may coordinate leading and lagging strand DNA synthesis at the replication fork.

The protein localises to the host nucleus. It carries out the reaction DNA(n) + a 2'-deoxyribonucleoside 5'-triphosphate = DNA(n+1) + diphosphate. The catalysed reaction is Endonucleolytic cleavage to 5'-phosphomonoester.. In terms of biological role, replicates viral genomic DNA. The replication complex is composed of six viral proteins: the DNA polymerase, processivity factor, primase, primase-associated factor, helicase, and ssDNA-binding protein. Additionally, the polymerase contains an intrinsic ribonuclease H (RNase H) activity that specifically degrades RNA/DNA heteroduplexes or duplex DNA substrates in the 5' to 3' direction. Therefore, it can catalyze the excision of the RNA primers that initiate the synthesis of Okazaki fragments at a replication fork during viral DNA replication. The protein is DNA polymerase catalytic subunit of Homo sapiens (Human).